We begin with the raw amino-acid sequence, 433 residues long: E3 ubiquitin-protein ligase RGLG5 (433 aa).

A disordered region spans residues 1 to 61 (MGGSSSKESP…SYNSGRQTPK (61 aa)). The N-myristoyl glycine moiety is linked to residue Gly-2. Residues 22–39 (SVSGSSSYSSAWDQSSYY) are compositionally biased toward low complexity. A compositionally biased stretch (polar residues) spans 40–61 (QTPNHPSASPVSSYNSGRQTPK). One can recognise a VWFA domain in the interval 93–313 (NLIVGIDVTK…KEAEFALSAL (221 aa)). Positions 340–383 (IALPPPTYATQSMRNSPRTSRSTSFQNKPYDNGVSSTPPSTTHN) are disordered. Positions 347-383 (YATQSMRNSPRTSRSTSFQNKPYDNGVSSTPPSTTHN) are enriched in polar residues. The RING-type zinc-finger motif lies at 390–423 (CPVCLVSAKNMAFNCGHQTCAGCGEDLHVCPICR).

Interacts with PP2CA. N-myristoylated.

The protein localises to the cell membrane. The catalysed reaction is S-ubiquitinyl-[E2 ubiquitin-conjugating enzyme]-L-cysteine + [acceptor protein]-L-lysine = [E2 ubiquitin-conjugating enzyme]-L-cysteine + N(6)-ubiquitinyl-[acceptor protein]-L-lysine.. Its function is as follows. Together with RGLG1, mediates the ubiquitination and subsequent proteasomal degradation of the target protein PP2CA. Functions as a positive regulator of abscisic acid (ABA) signaling through ABA-dependent degradation of PP2CA, a major inhibitor of ABA signaling. The chain is E3 ubiquitin-protein ligase RGLG5 from Arabidopsis thaliana (Mouse-ear cress).